Here is a 473-residue protein sequence, read N- to C-terminus: 3-isopropylmalate dehydratase large subunit (473 aa).

The [4Fe-4S] cluster site is built by Cys348, Cys408, and Cys411. Residues 421–440 are disordered; sequence GDEASASSSNRNFIGRQGSK.

Belongs to the aconitase/IPM isomerase family. LeuC type 1 subfamily. In terms of assembly, heterodimer of LeuC and LeuD. It depends on [4Fe-4S] cluster as a cofactor.

The catalysed reaction is (2R,3S)-3-isopropylmalate = (2S)-2-isopropylmalate. Its pathway is amino-acid biosynthesis; L-leucine biosynthesis; L-leucine from 3-methyl-2-oxobutanoate: step 2/4. In terms of biological role, catalyzes the isomerization between 2-isopropylmalate and 3-isopropylmalate, via the formation of 2-isopropylmaleate. This is 3-isopropylmalate dehydratase large subunit from Haloferax volcanii (strain ATCC 29605 / DSM 3757 / JCM 8879 / NBRC 14742 / NCIMB 2012 / VKM B-1768 / DS2) (Halobacterium volcanii).